The chain runs to 339 residues: UDP-galactose transporter homolog 1 (339 aa).

9 consecutive transmembrane segments (helical) span residues 5–25 (ILKH…WGLL), 43–63 (VPYI…LIYI), 91–111 (AISA…TYML), 138–158 (LVVL…HKPS), 171–191 (SSLI…LTNA), 208–228 (HLMF…MVLV), 246–268 (ISRY…FYTL), 273–295 (SLVL…IIVY), and 301–321 (LWQW…SMGK).

The protein belongs to the nucleotide-sugar transporter family. SLC35B subfamily.

The protein localises to the endoplasmic reticulum membrane. May be involved in specific transport of UDP-Gal from the cytosol to the Golgi lumen. Involved in the maintenance of optimal conditions for the folding of secretory pathway proteins in the endoplasmic reticulum. In Kluyveromyces lactis (strain ATCC 8585 / CBS 2359 / DSM 70799 / NBRC 1267 / NRRL Y-1140 / WM37) (Yeast), this protein is UDP-galactose transporter homolog 1 (HUT1).